Consider the following 37-residue polypeptide: Putative preoptic regulatory factor 1 (37 aa).

Propeptides lie at residues 1–7 (MPYSLQP) and 18–37 (FPLC…PPDL).

It belongs to the GnRH family. Preoptic area and testis.

The protein localises to the secreted. Its function is as follows. Precursor for a gonadotropin regulatory hormone (GNRH) related decapeptide. This chain is Putative preoptic regulatory factor 1 (Porf1), found in Rattus norvegicus (Rat).